The sequence spans 548 residues: DNA ligase (548 aa).

E252 lines the ATP pocket. K254 acts as the N6-AMP-lysine intermediate in catalysis. R259, R274, E303, F343, R414, and K420 together coordinate ATP.

This sequence belongs to the ATP-dependent DNA ligase family. It depends on Mg(2+) as a cofactor.

It catalyses the reaction ATP + (deoxyribonucleotide)n-3'-hydroxyl + 5'-phospho-(deoxyribonucleotide)m = (deoxyribonucleotide)n+m + AMP + diphosphate.. In terms of biological role, DNA ligase that seals nicks in double-stranded DNA during DNA replication, DNA recombination and DNA repair. This is DNA ligase from Natronomonas pharaonis (strain ATCC 35678 / DSM 2160 / CIP 103997 / JCM 8858 / NBRC 14720 / NCIMB 2260 / Gabara) (Halobacterium pharaonis).